A 121-amino-acid polypeptide reads, in one-letter code: Large ribosomal subunit protein bL12 (121 aa).

This sequence belongs to the bacterial ribosomal protein bL12 family. Homodimer. Part of the ribosomal stalk of the 50S ribosomal subunit. Forms a multimeric L10(L12)X complex, where L10 forms an elongated spine to which 2 to 4 L12 dimers bind in a sequential fashion. Binds GTP-bound translation factors.

Functionally, forms part of the ribosomal stalk which helps the ribosome interact with GTP-bound translation factors. Is thus essential for accurate translation. The protein is Large ribosomal subunit protein bL12 of Pectobacterium carotovorum subsp. carotovorum (strain PC1).